Reading from the N-terminus, the 222-residue chain is Ribonuclease T (222 aa).

The region spanning 20 to 194 (VVIDVETAGF…YDTERTAELF (175 aa)) is the Exonuclease domain. Mg(2+) is bound by residues aspartate 23, glutamate 25, histidine 181, and aspartate 186. Residue histidine 181 is the Proton donor/acceptor of the active site.

It belongs to the RNase T family. Homodimer. Mg(2+) serves as cofactor.

In terms of biological role, trims short 3' overhangs of a variety of RNA species, leaving a one or two nucleotide 3' overhang. Responsible for the end-turnover of tRNA: specifically removes the terminal AMP residue from uncharged tRNA (tRNA-C-C-A). Also appears to be involved in tRNA biosynthesis. In Shewanella oneidensis (strain ATCC 700550 / JCM 31522 / CIP 106686 / LMG 19005 / NCIMB 14063 / MR-1), this protein is Ribonuclease T.